Reading from the N-terminus, the 994-residue chain is UPF0182 protein Strop_3729 (994 aa).

7 helical membrane-spanning segments follow: residues 18-38, 61-81, 110-130, 174-194, 209-229, 260-280, and 283-303; these read IGVL…VQAW, LLLF…NLWL, IGLW…LSAQ, FTAV…FGGI, AHLS…YVLD, ILAY…NAWM, and LVWP…IGGI. Disordered stretches follow at residues 891 to 934 and 970 to 994; these read GEQA…AEAA and FEQA…SPGG. Residues 897–926 are compositionally biased toward pro residues; that stretch reads PSPPPSDDETPPSPTPTPTPTTPSVTPPPL.

Belongs to the UPF0182 family.

It localises to the cell membrane. The polypeptide is UPF0182 protein Strop_3729 (Salinispora tropica (strain ATCC BAA-916 / DSM 44818 / JCM 13857 / NBRC 105044 / CNB-440)).